We begin with the raw amino-acid sequence, 446 residues long: tRNA-2-methylthio-N(6)-dimethylallyladenosine synthase (446 aa).

The MTTase N-terminal domain maps to 2 to 122 (KKAYVKSYGC…LPDLLRQSRE (121 aa)). [4Fe-4S] cluster-binding residues include Cys-11, Cys-47, Cys-85, Cys-157, Cys-161, and Cys-164. A Radical SAM core domain is found at 143–375 (RNRGVTGFLT…QDLLDRQRHA (233 aa)). In terms of domain architecture, TRAM spans 378-440 (AASVGTLTEI…SNSLFGEALE (63 aa)).

Belongs to the methylthiotransferase family. MiaB subfamily. As to quaternary structure, monomer. Requires [4Fe-4S] cluster as cofactor.

The protein resides in the cytoplasm. The enzyme catalyses N(6)-dimethylallyladenosine(37) in tRNA + (sulfur carrier)-SH + AH2 + 2 S-adenosyl-L-methionine = 2-methylsulfanyl-N(6)-dimethylallyladenosine(37) in tRNA + (sulfur carrier)-H + 5'-deoxyadenosine + L-methionine + A + S-adenosyl-L-homocysteine + 2 H(+). Its function is as follows. Catalyzes the methylthiolation of N6-(dimethylallyl)adenosine (i(6)A), leading to the formation of 2-methylthio-N6-(dimethylallyl)adenosine (ms(2)i(6)A) at position 37 in tRNAs that read codons beginning with uridine. This is tRNA-2-methylthio-N(6)-dimethylallyladenosine synthase from Methylorubrum extorquens (strain CM4 / NCIMB 13688) (Methylobacterium extorquens).